The following is a 498-amino-acid chain: Protein nucleotidyltransferase YdiU (498 aa).

Positions 88, 90, 91, 111, 123, 124, 174, and 181 each coordinate ATP. D250 serves as the catalytic Proton acceptor. 2 residues coordinate Mg(2+): N251 and D260. ATP is bound at residue D260.

This sequence belongs to the SELO family. It depends on Mg(2+) as a cofactor. Mn(2+) serves as cofactor.

The catalysed reaction is L-seryl-[protein] + ATP = 3-O-(5'-adenylyl)-L-seryl-[protein] + diphosphate. The enzyme catalyses L-threonyl-[protein] + ATP = 3-O-(5'-adenylyl)-L-threonyl-[protein] + diphosphate. It catalyses the reaction L-tyrosyl-[protein] + ATP = O-(5'-adenylyl)-L-tyrosyl-[protein] + diphosphate. It carries out the reaction L-histidyl-[protein] + UTP = N(tele)-(5'-uridylyl)-L-histidyl-[protein] + diphosphate. The catalysed reaction is L-seryl-[protein] + UTP = O-(5'-uridylyl)-L-seryl-[protein] + diphosphate. The enzyme catalyses L-tyrosyl-[protein] + UTP = O-(5'-uridylyl)-L-tyrosyl-[protein] + diphosphate. Its function is as follows. Nucleotidyltransferase involved in the post-translational modification of proteins. It can catalyze the addition of adenosine monophosphate (AMP) or uridine monophosphate (UMP) to a protein, resulting in modifications known as AMPylation and UMPylation. The protein is Protein nucleotidyltransferase YdiU of Methylorubrum populi (strain ATCC BAA-705 / NCIMB 13946 / BJ001) (Methylobacterium populi).